The primary structure comprises 338 residues: Glycerol-3-phosphate dehydrogenase [NAD(P)+] (338 aa).

Residues Ser14, Tyr15, His35, and Lys109 each coordinate NADPH. Lys109, Gly138, and Thr140 together coordinate sn-glycerol 3-phosphate. Ala142 is a binding site for NADPH. Residues Lys194, Asp247, Ser257, Arg258, and Asn259 each coordinate sn-glycerol 3-phosphate. Lys194 acts as the Proton acceptor in catalysis. NADPH is bound at residue Arg258. Residues Val282 and Glu284 each contribute to the NADPH site.

This sequence belongs to the NAD-dependent glycerol-3-phosphate dehydrogenase family.

Its subcellular location is the cytoplasm. The enzyme catalyses sn-glycerol 3-phosphate + NAD(+) = dihydroxyacetone phosphate + NADH + H(+). It carries out the reaction sn-glycerol 3-phosphate + NADP(+) = dihydroxyacetone phosphate + NADPH + H(+). Its pathway is membrane lipid metabolism; glycerophospholipid metabolism. Catalyzes the reduction of the glycolytic intermediate dihydroxyacetone phosphate (DHAP) to sn-glycerol 3-phosphate (G3P), the key precursor for phospholipid synthesis. This chain is Glycerol-3-phosphate dehydrogenase [NAD(P)+], found in Shewanella baltica (strain OS155 / ATCC BAA-1091).